Here is a 494-residue protein sequence, read N- to C-terminus: Probable cytosol aminopeptidase (494 aa).

Residues K264 and D269 each contribute to the Mn(2+) site. Residue K276 is part of the active site. Residues D287, D346, and E348 each contribute to the Mn(2+) site. R350 is an active-site residue.

This sequence belongs to the peptidase M17 family. Mn(2+) is required as a cofactor.

It is found in the cytoplasm. It carries out the reaction Release of an N-terminal amino acid, Xaa-|-Yaa-, in which Xaa is preferably Leu, but may be other amino acids including Pro although not Arg or Lys, and Yaa may be Pro. Amino acid amides and methyl esters are also readily hydrolyzed, but rates on arylamides are exceedingly low.. The catalysed reaction is Release of an N-terminal amino acid, preferentially leucine, but not glutamic or aspartic acids.. In terms of biological role, presumably involved in the processing and regular turnover of intracellular proteins. Catalyzes the removal of unsubstituted N-terminal amino acids from various peptides. The protein is Probable cytosol aminopeptidase (pepA) of Pasteurella multocida (strain Pm70).